A 192-amino-acid chain; its full sequence is Cytochrome c4 (192 aa).

Cytochrome c domains follow at residues 12-90 and 99-191; these read GDPQ…ATQP and ELAS…QGLS. Cysteine 25, cysteine 28, histidine 29, cysteine 120, cysteine 123, and histidine 124 together coordinate heme c.

Post-translationally, binds 2 heme c groups covalently per subunit.

The protein localises to the periplasm. Its function is as follows. Diheme, high potential cytochrome c believed to be an intermediate electron donor in an anaerobic electron transport chain. This chain is Cytochrome c4, found in Thiocapsa roseopersicina.